Consider the following 75-residue polypeptide: Large ribosomal subunit protein bL28 (75 aa).

The interval 1-21 (MARVCQVTGKRPMSGNKRSHA) is disordered.

The protein belongs to the bacterial ribosomal protein bL28 family.

The protein is Large ribosomal subunit protein bL28 of Blochmanniella pennsylvanica (strain BPEN).